Reading from the N-terminus, the 404-residue chain is Cysteine desulfurase IscS (404 aa).

Pyridoxal 5'-phosphate-binding positions include alanine 75–threonine 76, asparagine 155, glutamine 183, and serine 203–histidine 205. Lysine 206 is subject to N6-(pyridoxal phosphate)lysine. Position 243 (threonine 243) interacts with pyridoxal 5'-phosphate. Residue cysteine 328 is the Cysteine persulfide intermediate of the active site. Cysteine 328 contributes to the [2Fe-2S] cluster binding site.

Belongs to the class-V pyridoxal-phosphate-dependent aminotransferase family. NifS/IscS subfamily. In terms of assembly, homodimer. Forms a heterotetramer with IscU, interacts with other sulfur acceptors. Requires pyridoxal 5'-phosphate as cofactor.

The protein resides in the cytoplasm. It catalyses the reaction (sulfur carrier)-H + L-cysteine = (sulfur carrier)-SH + L-alanine. The protein operates within cofactor biosynthesis; iron-sulfur cluster biosynthesis. Master enzyme that delivers sulfur to a number of partners involved in Fe-S cluster assembly, tRNA modification or cofactor biosynthesis. Catalyzes the removal of elemental sulfur atoms from cysteine to produce alanine. Functions as a sulfur delivery protein for Fe-S cluster synthesis onto IscU, an Fe-S scaffold assembly protein, as well as other S acceptor proteins. The sequence is that of Cysteine desulfurase IscS from Edwardsiella ictaluri (strain 93-146).